The primary structure comprises 628 residues: Glutamyl-tRNA(Gln) amidotransferase subunit E (628 aa).

This sequence belongs to the GatB/GatE family. GatE subfamily. In terms of assembly, heterodimer of GatD and GatE.

It catalyses the reaction L-glutamyl-tRNA(Gln) + L-glutamine + ATP + H2O = L-glutaminyl-tRNA(Gln) + L-glutamate + ADP + phosphate + H(+). Its function is as follows. Allows the formation of correctly charged Gln-tRNA(Gln) through the transamidation of misacylated Glu-tRNA(Gln) in organisms which lack glutaminyl-tRNA synthetase. The reaction takes place in the presence of glutamine and ATP through an activated gamma-phospho-Glu-tRNA(Gln). The GatDE system is specific for glutamate and does not act on aspartate. This is Glutamyl-tRNA(Gln) amidotransferase subunit E from Pyrococcus furiosus (strain ATCC 43587 / DSM 3638 / JCM 8422 / Vc1).